The following is a 481-amino-acid chain: Beta-amyrin 16-beta-monooxygenase (481 aa).

Residues 4–24 form a helical membrane-spanning segment; it reads LFIIISLVIVILTTIFILSNL. Residue Cys428 participates in heme binding.

This sequence belongs to the cytochrome P450 family. It depends on heme as a cofactor. In terms of tissue distribution, highly expressed in roots. Expressed at very low levels in leaves and petals.

It localises to the membrane. The enzyme catalyses beta-amyrin + reduced [NADPH--hemoprotein reductase] + O2 = maniladiol + oxidized [NADPH--hemoprotein reductase] + H2O + H(+). It catalyses the reaction oleanolate + reduced [NADPH--hemoprotein reductase] + O2 = cochalate + oxidized [NADPH--hemoprotein reductase] + H2O + H(+). Its function is as follows. Involved in triterpenoid saponin biosynthesis in roots. Catalyzes the hydroxylation of beta-amyrin at the C-16 beta position to form maniladiol. Is also able to oxidize oleanolat to cochalate. Has weak activity catalyzing the three-step oxidation at C-28 of beta-amyrin to form oleanolate. This chain is Beta-amyrin 16-beta-monooxygenase, found in Platycodon grandiflorus (Balloon flower).